The primary structure comprises 585 residues: A-type ATP synthase subunit A (585 aa).

Position 232 to 239 (232 to 239 (GPFGSGKT)) interacts with ATP.

Belongs to the ATPase alpha/beta chains family. Has multiple subunits with at least A(3), B(3), C, D, E, F, H, I and proteolipid K(x).

The protein resides in the cell membrane. The catalysed reaction is ATP + H2O + 4 H(+)(in) = ADP + phosphate + 5 H(+)(out). In terms of biological role, component of the A-type ATP synthase that produces ATP from ADP in the presence of a proton gradient across the membrane. The A chain is the catalytic subunit. This chain is A-type ATP synthase subunit A, found in Methanosphaera stadtmanae (strain ATCC 43021 / DSM 3091 / JCM 11832 / MCB-3).